Reading from the N-terminus, the 357-residue chain is Neutral protease 2 homolog BDCG_00922 (357 aa).

An N-terminal signal peptide occupies residues 1 to 19 (MRSPQSILAIVAFATTAIA). Positions 20–182 (GVVPSTEKRA…FASLNQFSKR (163 aa)) are excised as a propeptide. 3 disulfides stabilise this stretch: Cys188–Cys259, Cys266–Cys284, and Cys297–Cys357. Residue His308 coordinates Zn(2+). Glu309 is a catalytic residue. The Zn(2+) site is built by His312 and Asp323.

This sequence belongs to the peptidase M35 family. Zn(2+) is required as a cofactor.

It localises to the secreted. The catalysed reaction is Preferential cleavage of bonds with hydrophobic residues in P1'. Also 3-Asn-|-Gln-4 and 8-Gly-|-Ser-9 bonds in insulin B chain.. In terms of biological role, secreted metalloproteinase that allows assimilation of proteinaceous substrates. Shows high activities on basic nuclear substrates such as histone and protamine. In Ajellomyces dermatitidis (strain ER-3 / ATCC MYA-2586) (Blastomyces dermatitidis), this protein is Neutral protease 2 homolog BDCG_00922.